A 572-amino-acid chain; its full sequence is 2-succinyl-5-enolpyruvyl-6-hydroxy-3-cyclohexene-1-carboxylate synthase (572 aa).

The protein belongs to the TPP enzyme family. MenD subfamily. Homodimer. Mg(2+) is required as a cofactor. Requires Mn(2+) as cofactor. The cofactor is thiamine diphosphate.

The enzyme catalyses isochorismate + 2-oxoglutarate + H(+) = 5-enolpyruvoyl-6-hydroxy-2-succinyl-cyclohex-3-ene-1-carboxylate + CO2. It participates in quinol/quinone metabolism; 1,4-dihydroxy-2-naphthoate biosynthesis; 1,4-dihydroxy-2-naphthoate from chorismate: step 2/7. The protein operates within quinol/quinone metabolism; menaquinone biosynthesis. Catalyzes the thiamine diphosphate-dependent decarboxylation of 2-oxoglutarate and the subsequent addition of the resulting succinic semialdehyde-thiamine pyrophosphate anion to isochorismate to yield 2-succinyl-5-enolpyruvyl-6-hydroxy-3-cyclohexene-1-carboxylate (SEPHCHC). In Vibrio campbellii (strain ATCC BAA-1116), this protein is 2-succinyl-5-enolpyruvyl-6-hydroxy-3-cyclohexene-1-carboxylate synthase.